Reading from the N-terminus, the 363-residue chain is MTTDLKKTPLYQNYVDSGAKIVEFGGWAMPVQFSSIKEEHNAVRYNVGLFDVSHMGEIEISGKDAEQFIQYILSNDTNLLTNDKAMYSALCNDEGGIIDDLVTYKLNENHYLLIVNAANTNKDYQWIKKHSSNFTVDVSNTSDKYGQLAIQGPHSRALINELVDIDVSHMAMFEFKQNVQIFGKSIILSQSGYTGEDGFEIYCKQEDTKDIWEQLLEYDVTPCGLGARDTLRLEAGLPLHGQDLSESITPYEGGIAFAAKPLIENHFIGKSVLKAQKENGSERRTVGLELLGKGIARTGYDVLDENSNEIGFVTSGTQSPSSGKSIALAIIDRDAFEMGKKVIVQIRKRQVEAKIVKKNQIEK.

This sequence belongs to the GcvT family. As to quaternary structure, the glycine cleavage system is composed of four proteins: P, T, L and H.

It catalyses the reaction N(6)-[(R)-S(8)-aminomethyldihydrolipoyl]-L-lysyl-[protein] + (6S)-5,6,7,8-tetrahydrofolate = N(6)-[(R)-dihydrolipoyl]-L-lysyl-[protein] + (6R)-5,10-methylene-5,6,7,8-tetrahydrofolate + NH4(+). Its function is as follows. The glycine cleavage system catalyzes the degradation of glycine. The chain is Aminomethyltransferase from Staphylococcus epidermidis (strain ATCC 35984 / DSM 28319 / BCRC 17069 / CCUG 31568 / BM 3577 / RP62A).